A 93-amino-acid polypeptide reads, in one-letter code: Alpha-elapitoxin-Oh2a (93 aa).

The first 21 residues, 1 to 21 (MKTLLLTLVVVTIVCLDLGYT), serve as a signal peptide directing secretion. 5 disulfides stabilise this stretch: C24–C43, C36–C64, C49–C53, C68–C79, and C80–C85.

The protein belongs to the three-finger toxin family. Long-chain subfamily. Type II alpha-neurotoxin sub-subfamily. In terms of tissue distribution, expressed by the venom gland.

The protein localises to the secreted. Functionally, binds with high affinity to muscular (alpha-1/CHRNA1) and neuronal (alpha-7/CHRNA7) nicotinic acetylcholine receptor (nAChR) and inhibits acetylcholine from binding to the receptor, thereby impairing neuromuscular and neuronal transmission. In Ophiophagus hannah (King cobra), this protein is Alpha-elapitoxin-Oh2a.